We begin with the raw amino-acid sequence, 367 residues long: Homeobox protein Nkx-6.1 (367 aa).

A disordered region spans residues 36–133; sequence YPAAYPPLPA…SSSSSSSASA (98 aa). Low complexity-rich tracts occupy residues 48–59, 78–91, and 110–133; these read PSSSSSSSSSSS, GGLS…QQLS, and ASGA…SASA. Positions 102–268 are repressor domain; sequence LSRPSMPVAS…KYLAGPERAR (167 aa). At R189 the chain carries Asymmetric dimethylarginine. Positions 236–295 form a DNA-binding region, homeobox; sequence RKHTRPTFSGQQIFALEKTFEQTKYLAGPERARLAYSLGMTESQVKVWFQNRRTKWRKKH. The disordered stretch occupies residues 294–367; sequence KHAAEMATAK…LHASEPESSS (74 aa). A compositionally biased stretch (basic and acidic residues) spans 304-317; that stretch reads KKQDSETERLKGAS. Residues 306–367 are involved in DNA-binding; sequence QDSETERLKG…LHASEPESSS (62 aa).

As to expression, pancreatic beta cells.

Its subcellular location is the nucleus. Functionally, transcription factor which binds to specific A/T-rich DNA sequences in the promoter regions of a number of genes. Involved in the development of insulin-producing beta cells in the islets of Langerhans at the secondary transition. Together with NKX2-2 and IRX3 acts to restrict the generation of motor neurons to the appropriate region of the neural tube. Belongs to the class II proteins of neuronal progenitor factors, which are induced by SHH signals. The protein is Homeobox protein Nkx-6.1 (NKX6-1) of Homo sapiens (Human).